Reading from the N-terminus, the 567-residue chain is Urease subunit alpha (567 aa).

The 439-residue stretch at 129 to 567 (GGIDTHIHWI…LPMAQRYFLF (439 aa)) folds into the Urease domain. Histidine 134, histidine 136, and lysine 217 together coordinate Ni(2+). At lysine 217 the chain carries N6-carboxylysine. Histidine 219 contacts substrate. Ni(2+) contacts are provided by histidine 246 and histidine 272. Histidine 320 (proton donor) is an active-site residue. Aspartate 360 is a binding site for Ni(2+).

This sequence belongs to the metallo-dependent hydrolases superfamily. Urease alpha subunit family. As to quaternary structure, heterotrimer of UreA (gamma), UreB (beta) and UreC (alpha) subunits. Three heterotrimers associate to form the active enzyme. Requires Ni cation as cofactor. Carboxylation allows a single lysine to coordinate two nickel ions.

The protein localises to the cytoplasm. The catalysed reaction is urea + 2 H2O + H(+) = hydrogencarbonate + 2 NH4(+). The protein operates within nitrogen metabolism; urea degradation; CO(2) and NH(3) from urea (urease route): step 1/1. The protein is Urease subunit alpha of Enterobacter sp. (strain 638).